Consider the following 464-residue polypeptide: MNEYDIKDTIAALSTPYSKSALAIIRMSGSKALEIASKICFYANNENKNINNFEHRKSYYALIKDENNIPVDEVIVLSSLSPNTFTSEDTIEFISHGSIVVIDALMNLLIKNGARAANRGEFTYRAYINGRIGISEAEAIHDLIDSNNKLMAEASIYKMRGRLTREIDKLRENIKNSLMLVYGELDFPEDETESFSYDKLIENFEIIKKDIENILSNSKRVENLINGIKVAILGRVNAGKSSIFNMILDRERAIVSNIAGTTRDFLSENIYIENIPFYLMDTAGFHKKADNDIELEGIERAKKCAYESDIILAVFDGSDIANEDDINLIEFLNALENKNIIYILNKSDEDKKFNKEIDNANIINISTKTKDGKDKLISALKDYVSDSDMDIFNKETYVNNRERCYLENGLKQIDICIKKSLESYSLDEVAEEMNILNNILGNVSGKVDAEEVINEIFANFCIGK.

Positions 26, 92, and 131 each coordinate (6S)-5-formyl-5,6,7,8-tetrahydrofolate. In terms of domain architecture, TrmE-type G spans 227–385 (GIKVAILGRV…LISALKDYVS (159 aa)). Asn-237 contacts K(+). GTP is bound by residues 237–242 (NAGKSS), 256–262 (SNIAGTT), and 281–284 (DTAG). Ser-241 contributes to the Mg(2+) binding site. K(+) contacts are provided by Ser-256, Ile-258, and Thr-261. Residue Thr-262 coordinates Mg(2+). (6S)-5-formyl-5,6,7,8-tetrahydrofolate is bound at residue Lys-464.

It belongs to the TRAFAC class TrmE-Era-EngA-EngB-Septin-like GTPase superfamily. TrmE GTPase family. As to quaternary structure, homodimer. Heterotetramer of two MnmE and two MnmG subunits. K(+) is required as a cofactor.

Its subcellular location is the cytoplasm. Functionally, exhibits a very high intrinsic GTPase hydrolysis rate. Involved in the addition of a carboxymethylaminomethyl (cmnm) group at the wobble position (U34) of certain tRNAs, forming tRNA-cmnm(5)s(2)U34. This is tRNA modification GTPase MnmE from Brachyspira hyodysenteriae (strain ATCC 49526 / WA1).